An 874-amino-acid chain; its full sequence is MKTSELRQKFLKFFETKGHTVVRSSSLVPHDDPTLLFTNAGMNQFKDVFLGFDKRPYSRATTAQKCVRAGGKHNDLENVGYTARHHTFFEMMGNFSFGDYFKRDAIHFAWEFLTSPEWLNIPKDKLLATVYAEDDEAYNIWLNEIGMPSERIVRIGDNKGAKYASDNFWQMGDTGPCGPCSEIFYDHGEEIWGGIPGSPEEDGDRWIEIWNCVFMQFNRDEQGNMNPLPKPSVDTGMGLERIAAVMQHVHSNYEIDLFQDLLKAVARETGAPFRMEEPSLKVIADHIRSCSFLIADGVLPSNEGRGYVLRRIIRRAVRHGYKLGQSKPFFHKLVADLVKEMGGAYPELKEKQAQIEEALKNEESRFAQTLETGMALLENALVKGGKTLGGEIIFKLYDTYGFPYDLTADICRERNIEPDEAGFEREMEAQRARARAAQSFKANAQLPYDGQDTEFKGYSERQTESKVLALYKDGEQVNELNEGDSGAVVIDFTPFYAESGGQVGDVGYIFSGENRFEVRDTQKIKAAVFGQFGVQTSGRLKVGDSVTAKVDDEIRNANMRNHSATHLMHKALRDVLGRHVEQKGSLVTAESTRFDISHPQAVTAEEIAEVERRVNEAILANVAVNAAIMSMEDAQKTGAMMLFGEKYGEEVRVLQMGGFSTELCGGTHVSRTGDIGLFKIISEGGIAAGVRRIEAITGLNALKWAQEQERLVKDIIAETKAQTEKDVLAKIQAGAAHAKALEKELARAKAELAVHAGAKLLDDAKDLGAAKLVAAQIEADAAALREIVTDLTGKSDNAVILLAAVNDGKVSLCAGVSKPLTGKVKAGDLVKFAAEQVGGKGGGRPDLAQAGGTDADKLPAVLDSVKDWVGAKLV.

The Zn(2+) site is built by His-562, His-566, Cys-664, and His-668.

It belongs to the class-II aminoacyl-tRNA synthetase family. It depends on Zn(2+) as a cofactor.

The protein localises to the cytoplasm. The enzyme catalyses tRNA(Ala) + L-alanine + ATP = L-alanyl-tRNA(Ala) + AMP + diphosphate. Functionally, catalyzes the attachment of alanine to tRNA(Ala) in a two-step reaction: alanine is first activated by ATP to form Ala-AMP and then transferred to the acceptor end of tRNA(Ala). Also edits incorrectly charged Ser-tRNA(Ala) and Gly-tRNA(Ala) via its editing domain. This chain is Alanine--tRNA ligase, found in Neisseria meningitidis serogroup B (strain ATCC BAA-335 / MC58).